The following is a 627-amino-acid chain: CTP synthase (627 aa).

The Glutamine amidotransferase type-1 domain maps to 300 to 554 (CIAVVGKYTK…LASVDRLNQY (255 aa)). Catalysis depends on for GATase activity residues cysteine 399, histidine 526, and glutamate 528. 4 positions are modified to phosphoserine: serine 567, serine 570, serine 571, and serine 588. A Phosphothreonine modification is found at threonine 595. Polar residues predominate over residues 599–613 (GISKSCNGSISTSDS). Residues 599–627 (GISKSCNGSISTSDSEGACGGVDPTNGHK) are disordered.

It belongs to the CTP synthase family. As to expression, in ovary, expressed in oocytes, follicle cells and nurse cells. Also expressed in larval and adult testis (at protein level). In larvae, expressed in lymph gland, salivary gland, regions of the midgut, testis, optical lobe and trachea. Isoform 1 is expressed in adult testis, ovary, accessory gland and head. Isoform 2 is weakly expressed in ovary.

It localises to the cytoplasm. It catalyses the reaction UTP + L-glutamine + ATP + H2O = CTP + L-glutamate + ADP + phosphate + 2 H(+). Its pathway is pyrimidine metabolism; CTP biosynthesis via de novo pathway; CTP from UDP: step 2/2. Functionally, catalyzes the ATP-dependent amination of UTP to CTP with either L-glutamine or ammonia as the source of nitrogen. Constitutes the rate-limiting enzyme in the synthesis of cytosine nucleotides. Required for assembly of cytoophidium in female germline cells. In nurse cells, CTPsyn filament assembly in the cytoophidium is regulated by Ack kinase which may thereby contribute to the control of CTP production at specific stages of oogenesis and development of the nurse cell membrane. The sequence is that of CTP synthase from Drosophila melanogaster (Fruit fly).